A 187-amino-acid polypeptide reads, in one-letter code: Isopentenyl-diphosphate Delta-isomerase (187 aa).

The Mn(2+) site is built by His36, His43, and His80. The 138-residue stretch at 41 to 178 folds into the Nudix hydrolase domain; it reads VRHRAFTALL…RQLRLCPWFE (138 aa). Residue Glu98 coordinates Mg(2+). Mn(2+) contacts are provided by Glu127 and Glu129. Glu129 is a catalytic residue.

It belongs to the IPP isomerase type 1 family. It depends on Mg(2+) as a cofactor. Mn(2+) is required as a cofactor.

It is found in the cytoplasm. The enzyme catalyses isopentenyl diphosphate = dimethylallyl diphosphate. It participates in isoprenoid biosynthesis; dimethylallyl diphosphate biosynthesis; dimethylallyl diphosphate from isopentenyl diphosphate: step 1/1. Catalyzes the 1,3-allylic rearrangement of the homoallylic substrate isopentenyl (IPP) to its highly electrophilic allylic isomer, dimethylallyl diphosphate (DMAPP). In Haloarcula marismortui (strain ATCC 43049 / DSM 3752 / JCM 8966 / VKM B-1809) (Halobacterium marismortui), this protein is Isopentenyl-diphosphate Delta-isomerase.